We begin with the raw amino-acid sequence, 94 residues long: ATP synthase subunit c (94 aa).

Helical transmembrane passes span 15–35 and 61–81; these read VSVG…WGLI and GGLM…FIFA.

It belongs to the ATPase C chain family. F-type ATPases have 2 components, F(1) - the catalytic core - and F(0) - the membrane proton channel. F(1) has five subunits: alpha(3), beta(3), gamma(1), delta(1), epsilon(1). F(0) has three main subunits: a(1), b(2) and c(10-14). The alpha and beta chains form an alternating ring which encloses part of the gamma chain. F(1) is attached to F(0) by a central stalk formed by the gamma and epsilon chains, while a peripheral stalk is formed by the delta and b chains.

The protein localises to the cell inner membrane. In terms of biological role, f(1)F(0) ATP synthase produces ATP from ADP in the presence of a proton or sodium gradient. F-type ATPases consist of two structural domains, F(1) containing the extramembraneous catalytic core and F(0) containing the membrane proton channel, linked together by a central stalk and a peripheral stalk. During catalysis, ATP synthesis in the catalytic domain of F(1) is coupled via a rotary mechanism of the central stalk subunits to proton translocation. Functionally, key component of the F(0) channel; it plays a direct role in translocation across the membrane. A homomeric c-ring of between 10-14 subunits forms the central stalk rotor element with the F(1) delta and epsilon subunits. The sequence is that of ATP synthase subunit c from Nitrosococcus oceani (strain ATCC 19707 / BCRC 17464 / JCM 30415 / NCIMB 11848 / C-107).